We begin with the raw amino-acid sequence, 154 residues long: MSEKYIVTWDMLQIHTRILAHRLLKTKNAWNGIIAVSRGGLVPSAILARELGIRCVDTVCIASYNYDCLQKNRKIIKKARGDGEKIIVVDDLVDTGGTAKIIRNLYPKAYFVTIFAKPLGRLLVDDYIIDIDQNIWIEQPWDMSISYISPLIKK.

Residues 38–39, lysine 71, and 90–98 each bind 5-phospho-alpha-D-ribose 1-diphosphate; these read RG and DDLVDTGGT. Residue lysine 71 participates in GMP binding. Residue aspartate 91 coordinates Mg(2+). Positions 94 and 137 each coordinate guanine. Residues aspartate 94 and isoleucine 137 each contribute to the xanthine site. Residues 94 to 98 and 136 to 137 contribute to the GMP site; these read DTGGT and WI.

It belongs to the purine/pyrimidine phosphoribosyltransferase family. XGPT subfamily. Homotetramer. Mg(2+) is required as a cofactor.

The protein resides in the cell inner membrane. It catalyses the reaction GMP + diphosphate = guanine + 5-phospho-alpha-D-ribose 1-diphosphate. The enzyme catalyses XMP + diphosphate = xanthine + 5-phospho-alpha-D-ribose 1-diphosphate. The catalysed reaction is IMP + diphosphate = hypoxanthine + 5-phospho-alpha-D-ribose 1-diphosphate. It participates in purine metabolism; GMP biosynthesis via salvage pathway; GMP from guanine: step 1/1. The protein operates within purine metabolism; XMP biosynthesis via salvage pathway; XMP from xanthine: step 1/1. In terms of biological role, purine salvage pathway enzyme that catalyzes the transfer of the ribosyl-5-phosphate group from 5-phospho-alpha-D-ribose 1-diphosphate (PRPP) to the N9 position of the 6-oxopurines guanine and xanthine to form the corresponding ribonucleotides GMP (guanosine 5'-monophosphate) and XMP (xanthosine 5'-monophosphate), with the release of PPi. To a lesser extent, also acts on hypoxanthine. This is Xanthine-guanine phosphoribosyltransferase from Buchnera aphidicola subsp. Schizaphis graminum (strain Sg).